The following is a 319-amino-acid chain: Ribosomal RNA small subunit methyltransferase H (319 aa).

S-adenosyl-L-methionine is bound by residues 37–39, aspartate 57, phenylalanine 96, aspartate 105, and glutamine 112; that span reads GGY. Positions 292 to 302 are enriched in basic and acidic residues; sequence RPDEREKERNP. A disordered region spans residues 292–319; the sequence is RPDEREKERNPRSRSARLRAVEKQGVPA.

Belongs to the methyltransferase superfamily. RsmH family.

It localises to the cytoplasm. The catalysed reaction is cytidine(1402) in 16S rRNA + S-adenosyl-L-methionine = N(4)-methylcytidine(1402) in 16S rRNA + S-adenosyl-L-homocysteine + H(+). Its function is as follows. Specifically methylates the N4 position of cytidine in position 1402 (C1402) of 16S rRNA. The protein is Ribosomal RNA small subunit methyltransferase H of Syntrophobacter fumaroxidans (strain DSM 10017 / MPOB).